A 1265-amino-acid polypeptide reads, in one-letter code: Protein transport protein SEC31 (1265 aa).

WD repeat units follow at residues 6-46, 61-105, 116-156, 162-202, 209-252, 256-296, and 299-339; these read EIAR…ELWD, TVDN…KTKD, KHTG…EPFA, TPMD…EVLH, GGRA…APEK, GHKK…KLGE, and TTAN…PSVS. A WD 8; interaction with SEC13 repeat occupies 380–403; the sequence is SFGFGSKLVIINTDSSGKSTVKVD. Residues 457–480 show a composition bias toward basic and acidic residues; it reads KESLFEDANNDEKEATSPETKKEN. Disordered regions lie at residues 457–485, 765–784, and 793–1163; these read KESLFEDANNDEKEATSPETKKENGEDDF, VKSSANAKIAKPASSSGQTR, and PAYA…IPEN. A compositionally biased stretch (pro residues) spans 794-810; that stretch reads AYAPPVQAPPVQAPQPP. Composition is skewed to low complexity over residues 811–824, 865–875, 901–931, 939–951, and 969–987; these read LVQQQQQQQQQQQP, TPSSLSGTTSG, AKTAAPRRAAAAATPPVSTPTPVSAPAFGSP, SQPGSVGSVSSAG, and SISRSTSRTTVPTSSTVPA. Residues 1004–1023 show a composition bias toward polar residues; the sequence is SDASQPPSSGFASPTLNSSP. 2 stretches are compositionally biased toward pro residues: residues 1062–1071 and 1083–1101; these read YAPPKNPYAV and APPPPAPKLGSAAPPPPQP.

The protein belongs to the WD repeat SEC31 family. As to quaternary structure, the COPII coat is composed of at least 5 proteins: the SEC23/24 complex, the SEC13/31 complex, and the protein SAR1. SEC13 and SEC31 make a 2:2 tetramer that forms the edge element of the COPII outer coat. The tetramer self-assembles in multiple copies to form the complete polyhedral cage. Interacts (via WD 8) with SEC13.

It is found in the cytoplasmic vesicle. Its subcellular location is the COPII-coated vesicle membrane. The protein localises to the endoplasmic reticulum membrane. Its function is as follows. Component of the coat protein complex II (COPII) which promotes the formation of transport vesicles from the endoplasmic reticulum (ER). The coat has two main functions, the physical deformation of the endoplasmic reticulum membrane into vesicles and the selection of cargo molecules. This is Protein transport protein SEC31 (PGA63) from Candida albicans (strain SC5314 / ATCC MYA-2876) (Yeast).